A 486-amino-acid chain; its full sequence is NADH-quinone oxidoreductase subunit N (486 aa).

14 helical membrane-spanning segments follow: residues 14-34 (SIAP…LNFI), 45-65 (MLAI…SGIV), 77-97 (FAFI…PLTL), 105-125 (CSLA…EFMV), 130-150 (LIVI…LIAL), 163-183 (YFTM…IFYL), 203-223 (ILIA…LSLI), 237-257 (SEVM…IVAM), 268-288 (IAFI…LANI), 299-319 (MLAF…VIGT), 326-346 (LFLY…VLWF), 377-397 (FLMA…VFWG), 409-429 (GFIF…YYYL), and 459-479 (FIIT…KFWT).

It belongs to the complex I subunit 2 family. In terms of assembly, NDH-1 is composed of 14 different subunits. Subunits NuoA, H, J, K, L, M, N constitute the membrane sector of the complex.

Its subcellular location is the cell inner membrane. The catalysed reaction is a quinone + NADH + 5 H(+)(in) = a quinol + NAD(+) + 4 H(+)(out). Its function is as follows. NDH-1 shuttles electrons from NADH, via FMN and iron-sulfur (Fe-S) centers, to quinones in the respiratory chain. The immediate electron acceptor for the enzyme in this species is believed to be ubiquinone. Couples the redox reaction to proton translocation (for every two electrons transferred, four hydrogen ions are translocated across the cytoplasmic membrane), and thus conserves the redox energy in a proton gradient. This is NADH-quinone oxidoreductase subunit N from Campylobacter hominis (strain ATCC BAA-381 / DSM 21671 / CCUG 45161 / LMG 19568 / NCTC 13146 / CH001A).